We begin with the raw amino-acid sequence, 306 residues long: tRNA dimethylallyltransferase (306 aa).

Position 12–19 (12–19 (GPTAAGKT)) interacts with ATP. 14–19 (TAAGKT) contributes to the substrate binding site. Interaction with substrate tRNA stretches follow at residues 37-40 (DSAL), 161-165 (QRINR), and 242-247 (RCVGYR).

This sequence belongs to the IPP transferase family. In terms of assembly, monomer. It depends on Mg(2+) as a cofactor.

It carries out the reaction adenosine(37) in tRNA + dimethylallyl diphosphate = N(6)-dimethylallyladenosine(37) in tRNA + diphosphate. In terms of biological role, catalyzes the transfer of a dimethylallyl group onto the adenine at position 37 in tRNAs that read codons beginning with uridine, leading to the formation of N6-(dimethylallyl)adenosine (i(6)A). This Pseudoalteromonas translucida (strain TAC 125) protein is tRNA dimethylallyltransferase.